Reading from the N-terminus, the 95-residue chain is Small ribosomal subunit protein bS6 (95 aa).

This sequence belongs to the bacterial ribosomal protein bS6 family.

Binds together with bS18 to 16S ribosomal RNA. This Streptococcus agalactiae serotype Ia (strain ATCC 27591 / A909 / CDC SS700) protein is Small ribosomal subunit protein bS6.